The primary structure comprises 284 residues: Ribosomal RNA small subunit methyltransferase A (284 aa).

S-adenosyl-L-methionine-binding residues include asparagine 22, leucine 24, glycine 49, glutamate 70, aspartate 97, and asparagine 117.

It belongs to the class I-like SAM-binding methyltransferase superfamily. rRNA adenine N(6)-methyltransferase family. RsmA subfamily.

The protein resides in the cytoplasm. It carries out the reaction adenosine(1518)/adenosine(1519) in 16S rRNA + 4 S-adenosyl-L-methionine = N(6)-dimethyladenosine(1518)/N(6)-dimethyladenosine(1519) in 16S rRNA + 4 S-adenosyl-L-homocysteine + 4 H(+). Its function is as follows. Specifically dimethylates two adjacent adenosines (A1518 and A1519) in the loop of a conserved hairpin near the 3'-end of 16S rRNA in the 30S particle. May play a critical role in biogenesis of 30S subunits. This chain is Ribosomal RNA small subunit methyltransferase A, found in Desulforapulum autotrophicum (strain ATCC 43914 / DSM 3382 / VKM B-1955 / HRM2) (Desulfobacterium autotrophicum).